Here is an 863-residue protein sequence, read N- to C-terminus: Leucine--tRNA ligase (863 aa).

The short motif at 42-52 is the 'HIGH' region element; the sequence is PYPSGKLHMGH. The 'KMSKS' region motif lies at 623-627; that stretch reads KMSKS. Lys-626 serves as a coordination point for ATP.

This sequence belongs to the class-I aminoacyl-tRNA synthetase family.

Its subcellular location is the cytoplasm. The catalysed reaction is tRNA(Leu) + L-leucine + ATP = L-leucyl-tRNA(Leu) + AMP + diphosphate. This Paraburkholderia xenovorans (strain LB400) protein is Leucine--tRNA ligase.